We begin with the raw amino-acid sequence, 304 residues long: Probable WRKY transcription factor 13 (304 aa).

The segment at 141–190 is disordered; that stretch reads QKNNHGSEIDVDDNDDEVGDGGGINDDDNGRHHHHDTPSRHDKHNTASLG. The span at 149–159 shows a compositional bias: acidic residues; the sequence is IDVDDNDDEVG. The segment at residues 217-282 is a DNA-binding region (WRKY); it reads SEVDVLDDGY…YEGRHLHSPS (66 aa).

It belongs to the WRKY group II-c family.

It is found in the nucleus. Its function is as follows. Transcription factor. Interacts specifically with the W box (5'-(T)TGAC[CT]-3'), a frequently occurring elicitor-responsive cis-acting element. This chain is Probable WRKY transcription factor 13 (WRKY13), found in Arabidopsis thaliana (Mouse-ear cress).